A 132-amino-acid chain; its full sequence is Small ribosomal subunit protein uS8 (132 aa).

This sequence belongs to the universal ribosomal protein uS8 family. In terms of assembly, part of the 30S ribosomal subunit. Contacts proteins S5 and S12.

In terms of biological role, one of the primary rRNA binding proteins, it binds directly to 16S rRNA central domain where it helps coordinate assembly of the platform of the 30S subunit. The sequence is that of Small ribosomal subunit protein uS8 from Bartonella quintana (strain Toulouse) (Rochalimaea quintana).